The following is a 68-amino-acid chain: 1-carboxybiuret hydrolase subunit AtzG (68 aa).

In terms of assembly, heterotetramer consisting of 2 AtzE and 2 AtzG subunits.

It participates in xenobiotic degradation; atrazine degradation. Important for the activity of the AtzE subunit of 1-carboxybiuret hydrolase. The protein is 1-carboxybiuret hydrolase subunit AtzG of Pseudomonas sp. (strain ADP).